A 774-amino-acid polypeptide reads, in one-letter code: Armadillo-like helical domain-containing protein 4 (774 aa).

The first 27 residues, 1 to 27, serve as a signal peptide directing secretion; it reads MRGPIVLHICLAFCSLLLFSVATQCLA. Residues 28–714 are Extracellular-facing; sequence FPKIERRREI…KDKAGYMSGM (687 aa). Residues 41 to 52 are compositionally biased toward basic and acidic residues; that stretch reads HAEKGQSDKMNT. Disordered regions lie at residues 41–63 and 97–135; these read HAEK…VTSK and QPGQ…ERIS. Asparagine 57 carries an N-linked (GlcNAc...) asparagine glycan. An N-linked (GlcNAc...) asparagine glycan is attached at asparagine 189. Residues 221–233 show a composition bias toward basic and acidic residues; that stretch reads KTEKFEADTDHRT. Disordered stretches follow at residues 221 to 275 and 600 to 669; these read KTEK…QPLE and ASYG…PGLE. Over residues 258-275 the composition is skewed to polar residues; the sequence is SQMTADNTQAAATKQPLE. A compositionally biased stretch (acidic residues) spans 607 to 651; it reads LESEEGQEDEDEEDEEDEDEEEEDEEEDEEDKDADSLDEGLDGDT. The helical transmembrane segment at 715–735 threads the bilayer; it reads LVPVGVGIAGALFILGALYSI. At 736-774 the chain is on the cytoplasmic side; it reads KVMNRRRRNGFKRHKRKQREFNSMQDRVMLLADSSEDEF. Phosphoserine occurs at positions 769 and 770.

Interacts with IL6ST; this interaction prevents IL6ST protein homodimerization and bridges ARMH4 with IL6R and STAT3 and therefore inhibits phosphorylation of STAT3 at 'Tyr-705'. Interacts (via cytoplasmic tail) with RICTOR; this interaction bridges ARMH4 to the mTORC2 complex and inhibits the mTORC2 kinase activity. As to expression, expressed in podocytes.

The protein localises to the membrane. Functionally, may modulate immune response and may play a role in inflammation. Down-modulates STAT3 signaling throught direct interaction with IL6ST, resulting in the inhibition of phosphorylation of STAT3 at 'Tyr-705'. May negatively regulates AKT signaling by modulating the activity of mTORC2 complex through RICTOR interaction. In Homo sapiens (Human), this protein is Armadillo-like helical domain-containing protein 4.